We begin with the raw amino-acid sequence, 627 residues long: BEL1-like homeodomain protein 4 (627 aa).

Positions 206 to 225 (SSQHHHHQVVGHFGSSSSSP) are disordered. Positions 215–225 (VGHFGSSSSSP) are enriched in low complexity. An SR/KY domain region spans residues 241–257 (SKYTKPAQELLEEFCSV). The interval 263–307 (KKNKLSRNNSNPNTTGGGGGGGSSSSAGTANDSPPLSPADRIEHQ) is disordered. Residues 302-373 (DRIEHQRRKV…CLKDAVAVQL (72 aa)) are BELL domain. The segment at residues 424–486 (AWRPQRGLPE…NARVRLWKPM (63 aa)) is a DNA-binding region (homeobox). The interval 494–530 (EAKEREEAEEENENQQQQRRQQQTNNNDTKPNNNENN) is disordered. Low complexity predominate over residues 507–530 (NQQQQRRQQQTNNNDTKPNNNENN).

The protein belongs to the TALE/BELL homeobox family. In terms of assembly, may form heterodimeric complexes with TALE/KNOX proteins. Interacts with OFP1, OFP2 and OFP5. Interacts with KNATM, isoform KNATM-B. As to expression, expressed in lateral organs.

The protein resides in the nucleus. In terms of biological role, transcription factor that establishes leaf shape by repressing growth in specific subdomains of the leaf. Negatively regulates knox homeobox gene KNAT1/BP expression. The chain is BEL1-like homeodomain protein 4 (BLH4) from Arabidopsis thaliana (Mouse-ear cress).